The primary structure comprises 913 residues: Proline and serine-rich protein 1 (913 aa).

The residue at position 1 (methionine 1) is an N-acetylmethionine. 4 disordered regions span residues 233 to 291, 488 to 507, 592 to 618, and 888 to 913; these read VPPP…PAVS, ASLS…ATNK, SEPT…TLGL, and DGFP…SGWQ. A compositionally biased stretch (polar residues) spans 251-275; it reads LSSQSKPTQSQTFSTPASQLFSPHG. Positions 276-291 are enriched in low complexity; the sequence is SSNPSTPAATPVPAVS. Over residues 488-506 the composition is skewed to polar residues; the sequence is ASLSSLPNRNSDSPASATN. Positions 893–913 are enriched in polar residues; the sequence is YPSTPGTPFSLQTGLSQSGWQ.

As to quaternary structure, interacts with TET2 and OGT; this interaction mediates TET2 O-GlcNAcylation and stability by promoting the interaction between OGT and TET2. Interacts with KDM6A. Interacts with TET1. In terms of processing, glycosylated. Interaction with OGT leads to GlcNAcylation.

Functionally, mediates OGT interaction with and O-GlcNAcylation of TET2 to control TET2 stabilization at enhancers and CpG islands (CGIs). This Mus musculus (Mouse) protein is Proline and serine-rich protein 1.